Consider the following 401-residue polypeptide: Multidrug resistance protein MdtH (401 aa).

Transmembrane regions (helical) follow at residues 13 to 33 (YFLL…FPLI), 34 to 54 (SIRF…ALGL), 99 to 116 (PWIL…GTLF), 139 to 159 (LLMM…SWLL), 165 to 185 (FVCW…VWLL), 214 to 234 (VLTL…LPIV), 243 to 263 (AAVK…LYPI), 277 to 297 (LMFG…ITHL), 299 to 319 (TLFM…PARE), 340 to 360 (LGLA…YDTG), and 368 to 388 (LPWF…YWQF).

The protein belongs to the major facilitator superfamily. DHA1 family. MdtH (TC 2.A.1.2.21) subfamily.

Its subcellular location is the cell inner membrane. The sequence is that of Multidrug resistance protein MdtH from Yersinia enterocolitica serotype O:8 / biotype 1B (strain NCTC 13174 / 8081).